The chain runs to 586 residues: RNA-directed RNA polymerase subunit beta (586 aa).

Residues 259–391 (VRAYSGSCSN…TNEKKTFFDG (133 aa)) form the RdRp catalytic domain. Mg(2+)-binding residues include Asp274, Asp359, and Asp360.

In terms of assembly, homodimer; the replicase complex can dimerize. Part of the viral RNA-dependent RNA polymerase complex, the other subunits are the host ribosomal protein S1, EF-Tu and EF-Ts. S1 is needed for the initiation of genomic RNA (+)-strand replication. The cofactor is Mg(2+).

The enzyme catalyses RNA(n) + a ribonucleoside 5'-triphosphate = RNA(n+1) + diphosphate. This is the catalytic subunit of the viral RNA-dependent RNA polymerase complex. This complex is involved in viral RNA replication that produces (+)-stranded genomes via a complementary, (-)-stranded intermediate. Binds RNA cooperatively with the host ribosomal protein S1. The sequence is that of RNA-directed RNA polymerase subunit beta from Escherichia coli.